The chain runs to 310 residues: N-acetyl-gamma-glutamyl-phosphate reductase (310 aa).

C117 is an active-site residue.

Belongs to the NAGSA dehydrogenase family. Type 2 subfamily.

It is found in the cytoplasm. The catalysed reaction is N-acetyl-L-glutamate 5-semialdehyde + phosphate + NADP(+) = N-acetyl-L-glutamyl 5-phosphate + NADPH + H(+). It participates in amino-acid biosynthesis; L-arginine biosynthesis; N(2)-acetyl-L-ornithine from L-glutamate: step 3/4. In terms of biological role, catalyzes the NADPH-dependent reduction of N-acetyl-5-glutamyl phosphate to yield N-acetyl-L-glutamate 5-semialdehyde. In Brucella melitensis biotype 1 (strain ATCC 23456 / CCUG 17765 / NCTC 10094 / 16M), this protein is N-acetyl-gamma-glutamyl-phosphate reductase.